A 254-amino-acid chain; its full sequence is Leucyl/phenylalanyl-tRNA--protein transferase (254 aa).

The protein belongs to the L/F-transferase family.

The protein localises to the cytoplasm. It carries out the reaction N-terminal L-lysyl-[protein] + L-leucyl-tRNA(Leu) = N-terminal L-leucyl-L-lysyl-[protein] + tRNA(Leu) + H(+). The enzyme catalyses N-terminal L-arginyl-[protein] + L-leucyl-tRNA(Leu) = N-terminal L-leucyl-L-arginyl-[protein] + tRNA(Leu) + H(+). It catalyses the reaction L-phenylalanyl-tRNA(Phe) + an N-terminal L-alpha-aminoacyl-[protein] = an N-terminal L-phenylalanyl-L-alpha-aminoacyl-[protein] + tRNA(Phe). Functions in the N-end rule pathway of protein degradation where it conjugates Leu, Phe and, less efficiently, Met from aminoacyl-tRNAs to the N-termini of proteins containing an N-terminal arginine or lysine. This chain is Leucyl/phenylalanyl-tRNA--protein transferase, found in Burkholderia lata (strain ATCC 17760 / DSM 23089 / LMG 22485 / NCIMB 9086 / R18194 / 383).